A 324-amino-acid chain; its full sequence is MLQTTLLYLINPLAYIIPILLATAFLTLIERKILGYMQFRKGPNIVGPYGLLQPIADGLKLFIKEPIRPSASSRSYFLATPTVALALALLMWMPLPLPHSIINLNLGLLFILAISSLTVYTILGSGWASNSKYALMGALRAVAQTISYEVSLGLILLSMIIFAGGFTLHTFNLAQETIWLLIPGWPLAFMWYISTLAETNRAPFDLTEGESELVSGFNIEYAAGPFALFFLAEYTNILLMNTLSVILFMGTSYNPLMPQISSLSLMMKASMLTVLFLWIRASYPRFRYDQLMHLVWKNFLPLTLAIILWHMALPLATTSLPPLT.

Helical transmembrane passes span 9–29, 43–63, 77–97, 106–126, 146–166, 177–197, 228–248, 259–279, and 299–319; these read LINPLAYIIPILLATAFLTLI, PNIVGPYGLLQPIADGLKLFI, FLATPTVALALALLMWMPLPL, LGLLFILAISSLTVYTILGSG, ISYEVSLGLILLSMIIFAGGF, TIWLLIPGWPLAFMWYISTLA, LFFLAEYTNILLMNTLSVILF, QISSLSLMMKASMLTVLFLWI, and FLPLTLAIILWHMALPLATTS.

The protein belongs to the complex I subunit 1 family.

It is found in the mitochondrion inner membrane. The enzyme catalyses a ubiquinone + NADH + 5 H(+)(in) = a ubiquinol + NAD(+) + 4 H(+)(out). Functionally, core subunit of the mitochondrial membrane respiratory chain NADH dehydrogenase (Complex I) that is believed to belong to the minimal assembly required for catalysis. Complex I functions in the transfer of electrons from NADH to the respiratory chain. The immediate electron acceptor for the enzyme is believed to be ubiquinone. This is NADH-ubiquinone oxidoreductase chain 1 (MT-ND1) from Scyliorhinus canicula (Small-spotted catshark).